The following is a 657-amino-acid chain: 1-deoxy-D-xylulose-5-phosphate synthase (657 aa).

Thiamine diphosphate contacts are provided by residues histidine 73 and 113–115 (SHA). Aspartate 145 contacts Mg(2+). Residues 146–147 (GA), asparagine 175, tyrosine 293, and glutamate 375 each bind thiamine diphosphate. Mg(2+) is bound at residue asparagine 175.

The protein belongs to the transketolase family. DXPS subfamily. Homodimer. Mg(2+) is required as a cofactor. It depends on thiamine diphosphate as a cofactor.

It carries out the reaction D-glyceraldehyde 3-phosphate + pyruvate + H(+) = 1-deoxy-D-xylulose 5-phosphate + CO2. The protein operates within metabolic intermediate biosynthesis; 1-deoxy-D-xylulose 5-phosphate biosynthesis; 1-deoxy-D-xylulose 5-phosphate from D-glyceraldehyde 3-phosphate and pyruvate: step 1/1. Its function is as follows. Catalyzes the acyloin condensation reaction between C atoms 2 and 3 of pyruvate and glyceraldehyde 3-phosphate to yield 1-deoxy-D-xylulose-5-phosphate (DXP). This is 1-deoxy-D-xylulose-5-phosphate synthase from Renibacterium salmoninarum (strain ATCC 33209 / DSM 20767 / JCM 11484 / NBRC 15589 / NCIMB 2235).